The sequence spans 124 residues: Small ribosomal subunit protein uS12 (124 aa).

Position 89 is a 3-methylthioaspartic acid (D89).

The protein belongs to the universal ribosomal protein uS12 family. In terms of assembly, part of the 30S ribosomal subunit. Contacts proteins S8 and S17. May interact with IF1 in the 30S initiation complex.

With S4 and S5 plays an important role in translational accuracy. Functionally, interacts with and stabilizes bases of the 16S rRNA that are involved in tRNA selection in the A site and with the mRNA backbone. Located at the interface of the 30S and 50S subunits, it traverses the body of the 30S subunit contacting proteins on the other side and probably holding the rRNA structure together. The combined cluster of proteins S8, S12 and S17 appears to hold together the shoulder and platform of the 30S subunit. In Caldanaerobacter subterraneus subsp. tengcongensis (strain DSM 15242 / JCM 11007 / NBRC 100824 / MB4) (Thermoanaerobacter tengcongensis), this protein is Small ribosomal subunit protein uS12.